The chain runs to 130 residues: Small ribosomal subunit protein uS11 (130 aa).

The protein belongs to the universal ribosomal protein uS11 family. In terms of assembly, part of the 30S ribosomal subunit. Interacts with proteins S7 and S18. Binds to IF-3.

Located on the platform of the 30S subunit, it bridges several disparate RNA helices of the 16S rRNA. Forms part of the Shine-Dalgarno cleft in the 70S ribosome. This chain is Small ribosomal subunit protein uS11, found in Gluconacetobacter diazotrophicus (strain ATCC 49037 / DSM 5601 / CCUG 37298 / CIP 103539 / LMG 7603 / PAl5).